The chain runs to 216 residues: Elongation factor Ts (216 aa).

The involved in Mg(2+) ion dislocation from EF-Tu stretch occupies residues 81–84 (TDFV).

Belongs to the EF-Ts family.

The protein resides in the cytoplasm. In terms of biological role, associates with the EF-Tu.GDP complex and induces the exchange of GDP to GTP. It remains bound to the aminoacyl-tRNA.EF-Tu.GTP complex up to the GTP hydrolysis stage on the ribosome. This Citrifermentans bemidjiense (strain ATCC BAA-1014 / DSM 16622 / JCM 12645 / Bem) (Geobacter bemidjiensis) protein is Elongation factor Ts.